We begin with the raw amino-acid sequence, 479 residues long: Probable aspartic-type endopeptidase OPSB (479 aa).

The signal sequence occupies residues 1 to 19 (MRGDSFIWSLTTAASLLYA). In terms of domain architecture, Peptidase A1 spans 58-393 (SGKTVSQDLD…DLDNNEISIA (336 aa)). A glycan (N-linked (GlcNAc...) asparagine) is linked at Asn-68. Asp-76 is a catalytic residue. A glycan (N-linked (GlcNAc...) asparagine) is linked at Asn-121. Asp-275 is a catalytic residue. The N-linked (GlcNAc...) asparagine glycan is linked to Asn-398. A disordered region spans residues 435 to 454 (LSGIETGVPGARPTSRGAAP). A lipid anchor (GPI-anchor amidated glycine) is attached at Gly-451. Residues 452–479 (AAPTMRPDVTFGVAAAGLAGAGILFAFM) constitute a propeptide, removed in mature form.

Belongs to the peptidase A1 family.

It is found in the cell membrane. Functionally, probable GPI-anchored aspartic-type endopeptidase which contributes to virulence. In Arthroderma otae (strain ATCC MYA-4605 / CBS 113480) (Microsporum canis), this protein is Probable aspartic-type endopeptidase OPSB (OPSB).